The following is a 146-amino-acid chain: Small ribosomal subunit protein uS5 (146 aa).

The region spanning 8–71 (FSEVVVNIGR…DDAFKNIIKV (64 aa)) is the S5 DRBM domain.

The protein belongs to the universal ribosomal protein uS5 family. In terms of assembly, part of the 30S ribosomal subunit. Contacts proteins S4 and S8.

Its function is as follows. With S4 and S12 plays an important role in translational accuracy. Located at the back of the 30S subunit body where it stabilizes the conformation of the head with respect to the body. This is Small ribosomal subunit protein uS5 from Helicobacter hepaticus (strain ATCC 51449 / 3B1).